The primary structure comprises 341 residues: Ribosomal RNA small subunit methyltransferase H (341 aa).

Residues 47–49 (GGY), Asp-64, Phe-97, Asp-109, and Gln-116 each bind S-adenosyl-L-methionine.

This sequence belongs to the methyltransferase superfamily. RsmH family.

The protein localises to the cytoplasm. The enzyme catalyses cytidine(1402) in 16S rRNA + S-adenosyl-L-methionine = N(4)-methylcytidine(1402) in 16S rRNA + S-adenosyl-L-homocysteine + H(+). In terms of biological role, specifically methylates the N4 position of cytidine in position 1402 (C1402) of 16S rRNA. This chain is Ribosomal RNA small subunit methyltransferase H, found in Allorhizobium ampelinum (strain ATCC BAA-846 / DSM 112012 / S4) (Agrobacterium vitis (strain S4)).